Consider the following 475-residue polypeptide: BTB/POZ domain-containing protein 10 (475 aa).

The tract at residues 1–143 is disordered; sequence MAGRPHPYDG…SSQSSSDGSC (143 aa). Residues 22–31 show a composition bias toward basic residues; that stretch reads LHSRPRKLYK. A compositionally biased stretch (basic and acidic residues) spans 57–80; the sequence is GHERSRDRRRSSDRSRDSSHERTE. The segment covering 81–94 has biased composition (polar residues); the sequence is SQLTPCIRNVTSPT. Residues 97 to 107 are compositionally biased toward basic and acidic residues; sequence HHVEREKDHSS. The span at 108 to 142 shows a compositional bias: low complexity; it reads SRPSSPRPQKASPNGSISSAGNSSRNSSQSSSDGS. The segment at 146-475 is interaction with AKT family members; sequence AGEMVFVYEN…LDPDAQNPML (330 aa). Residues 167-241 form the BTB domain; sequence ERVTLIVDNT…YKTGIIRCPD (75 aa). The interval 455–475 is disordered; it reads LPIHPPSGNSDLDPDAQNPML.

In terms of assembly, interacts (via C-terminal 330-amino-acid region) with AKT1; AKT2 and AKT3. Interacts with PPP2CA and PPP1CA. In terms of tissue distribution, ubiquitously expressed. Highly expressed in adult brain, testis, aorta and small intestine and weakly expressed in the heart, lung, liver, kidney, pancreas, spleen, thymus, prostate, ovary and colon. Down-regulated in glioma.

Its subcellular location is the nucleus. It localises to the cytoplasm. Functionally, plays a major role as an activator of AKT family members by inhibiting PPP2CA-mediated dephosphorylation, thereby keeping AKTs activated. Plays a role in preventing motor neuronal death and accelerating the growth of pancreatic beta cells. This Homo sapiens (Human) protein is BTB/POZ domain-containing protein 10 (BTBD10).